The sequence spans 252 residues: MKTVTVKDLVIGTGAPKIIVSLMAKDIARVKSEALAYREADFDILEWRVDHFADLSNVESVMAAAKILRETMPEKPLLFTFRSAKEGGEQAISTEAYIALNRAAIDSGLVDMIDLELFTGDDQVKETVACAHAHDVKVVMSNHDFHKTPEAEEIIARLRKMQSFDADIPKIALMPQSTSDVLTLLAATLEMQEQYADRPIITMSMAKTGVISRLAGEVFGSAATFGAVKKASAPGQISVNDLRTVLTILHQA.

3-dehydroquinate-binding positions include serine 21, 46 to 48, and arginine 82; that span reads EWR. The active-site Proton donor/acceptor is histidine 143. Residue lysine 170 is the Schiff-base intermediate with substrate of the active site. Arginine 213, serine 232, and glutamine 236 together coordinate 3-dehydroquinate.

It belongs to the type-I 3-dehydroquinase family. As to quaternary structure, homodimer.

It carries out the reaction 3-dehydroquinate = 3-dehydroshikimate + H2O. It functions in the pathway metabolic intermediate biosynthesis; chorismate biosynthesis; chorismate from D-erythrose 4-phosphate and phosphoenolpyruvate: step 3/7. Functionally, involved in the third step of the chorismate pathway, which leads to the biosynthesis of aromatic amino acids. Catalyzes the cis-dehydration of 3-dehydroquinate (DHQ) and introduces the first double bond of the aromatic ring to yield 3-dehydroshikimate. This chain is 3-dehydroquinate dehydratase, found in Shigella boydii serotype 4 (strain Sb227).